Here is a 275-residue protein sequence, read N- to C-terminus: Polyamine aminopropyltransferase (275 aa).

One can recognise a PABS domain in the interval 2-235 (HLWFTEKQND…AMWSFTIGSK (234 aa)). Gln-31 provides a ligand contact to S-methyl-5'-thioadenosine. The spermidine site is built by His-62 and Asp-86. S-methyl-5'-thioadenosine contacts are provided by residues Glu-106 and 137 to 138 (DG). Catalysis depends on Asp-155, which acts as the Proton acceptor. 155-158 (DSTD) lines the spermidine pocket. Pro-162 is an S-methyl-5'-thioadenosine binding site.

The protein belongs to the spermidine/spermine synthase family. As to quaternary structure, homodimer or homotetramer.

It is found in the cytoplasm. It catalyses the reaction S-adenosyl 3-(methylsulfanyl)propylamine + putrescine = S-methyl-5'-thioadenosine + spermidine + H(+). It functions in the pathway amine and polyamine biosynthesis; spermidine biosynthesis; spermidine from putrescine: step 1/1. Its function is as follows. Catalyzes the irreversible transfer of a propylamine group from the amino donor S-adenosylmethioninamine (decarboxy-AdoMet) to putrescine (1,4-diaminobutane) to yield spermidine. The protein is Polyamine aminopropyltransferase of Desulforudis audaxviator (strain MP104C).